A 584-amino-acid polypeptide reads, in one-letter code: Putative poly(A) polymerase catalytic subunit (584 aa).

Positions 522–531 are enriched in basic and acidic residues; sequence EAEISEKEET. The interval 522-584 is disordered; that stretch reads EAEISEKEET…ENSLDSLTSD (63 aa). Residues 546 to 569 show a composition bias toward low complexity; it reads SPNSSPNSSPNNSLNNSIDISTNN.

This sequence belongs to the poxviridae poly(A) polymerase catalytic subunit family. Highly divergent.

The protein resides in the virion. It carries out the reaction RNA(n) + ATP = RNA(n)-3'-adenine ribonucleotide + diphosphate. Polymerase that creates the 3'-poly(A) tail of mRNA's. The protein is Putative poly(A) polymerase catalytic subunit of Acanthamoeba polyphaga (Amoeba).